The chain runs to 199 residues: MALNGAEVDDFSWEPPTEAETKVLQARRERQDRISRLMGDYLLRGYRMLGETCADCGTILLQDKQRKIYCVACQELDSDVDKDNPALNAQAALSQAREHQLASASELPLGSRPAPQPPVPRPEHCEGAAAGLKAAQGPPAPAVPPNTDVMACTQTALLQKLTWASAELGSSTSLETSIQLCGLIRACAEALRSLQQLQH.

Ala-2 carries the N-acetylalanine modification. Positions 53, 56, 70, and 73 each coordinate Zn(2+). Ser-94 carries the post-translational modification Phosphoserine. Residues 100–125 (QLASASELPLGSRPAPQPPVPRPEHC) are disordered. Positions 173–194 (SLETSIQLCGLIRACAEALRSL) match the Nuclear export signal motif.

Homodimer. The cofactor is Zn(2+).

The protein resides in the cytoplasm. In terms of biological role, might play a role in mitosis. Antigenic molecule. Could be a centromere-associated protein. May induce anti-centromere antibodies. This chain is Protein ZNRD2, found in Homo sapiens (Human).